The primary structure comprises 254 residues: MNFNVIIPARYASTRFPGKPLVEINGKPMVQHVYDRAIESGASNVIVATDDARIAKAVSDFGGKYCMTGAHHESGTERLAEVVEMQDMLSQEIVVNVQGDEPFIPAENIQQVAENLHHHQQAEMATLAVKIVDVEEAFNPNAVKVVLDKQGYAMYFTRATIPYDRARFLDEDIIDEIGDYYLRHVGIYAYRAGFIKQYVNMSPSGLEQIESLEQLRVLWHGEKIHVDIARKTPPAGIDTPEDLKRILADPSLKF.

Belongs to the KdsB family.

The protein resides in the cytoplasm. It carries out the reaction 3-deoxy-alpha-D-manno-oct-2-ulosonate + CTP = CMP-3-deoxy-beta-D-manno-octulosonate + diphosphate. It functions in the pathway nucleotide-sugar biosynthesis; CMP-3-deoxy-D-manno-octulosonate biosynthesis; CMP-3-deoxy-D-manno-octulosonate from 3-deoxy-D-manno-octulosonate and CTP: step 1/1. The protein operates within bacterial outer membrane biogenesis; lipopolysaccharide biosynthesis. Its function is as follows. Activates KDO (a required 8-carbon sugar) for incorporation into bacterial lipopolysaccharide in Gram-negative bacteria. The polypeptide is 3-deoxy-manno-octulosonate cytidylyltransferase (Pseudoalteromonas atlantica (strain T6c / ATCC BAA-1087)).